We begin with the raw amino-acid sequence, 589 residues long: Isocitrate dehydrogenase kinase/phosphatase (589 aa).

Residues 322 to 328 (APGIRGL) and K343 contribute to the ATP site. D378 is an active-site residue.

It belongs to the AceK family.

It localises to the cytoplasm. It catalyses the reaction L-seryl-[isocitrate dehydrogenase] + ATP = O-phospho-L-seryl-[isocitrate dehydrogenase] + ADP + H(+). In terms of biological role, bifunctional enzyme which can phosphorylate or dephosphorylate isocitrate dehydrogenase (IDH) on a specific serine residue. This is a regulatory mechanism which enables bacteria to bypass the Krebs cycle via the glyoxylate shunt in response to the source of carbon. When bacteria are grown on glucose, IDH is fully active and unphosphorylated, but when grown on acetate or ethanol, the activity of IDH declines drastically concomitant with its phosphorylation. The sequence is that of Isocitrate dehydrogenase kinase/phosphatase from Azoarcus sp. (strain BH72).